A 25-amino-acid polypeptide reads, in one-letter code: Ranatuerin-1 (25 aa).

Cysteine 19 and cysteine 25 are oxidised to a cystine.

Belongs to the frog skin active peptide (FSAP) family. Ranatuerin subfamily. As to expression, expressed by the skin glands.

The protein resides in the secreted. In terms of biological role, antibacterial activity against Gram-positive bacterium S.aureus (MIC=50 uM) and Gram-negative bacterium E.coli (MIC=2 uM). Has activity against C.albicans (MIC=70 uM). Shows no detectable hemolytic activity towards human erythrocytes. This is Ranatuerin-1 from Aquarana catesbeiana (American bullfrog).